Reading from the N-terminus, the 221-residue chain is Germin-like protein 5-1 (221 aa).

Positions 1-25 are cleaved as a signal peptide; it reads MARPSLPCAVVAVLLLALLPTPSTA. An intrachain disulfide couples C35 to C50. A Cupin type-1 domain is found at 62–210; it reads KGLAAAGNTN…AFQVGTKEVE (149 aa). N71 carries N-linked (GlcNAc...) asparagine glycosylation. Mn(2+) is bound by residues H110, H112, E117, and H156.

The protein belongs to the germin family. In terms of assembly, oligomer (believed to be a pentamer but probably hexamer).

It is found in the secreted. It localises to the extracellular space. The protein resides in the apoplast. In terms of biological role, may play a role in plant defense. Probably has no oxalate oxidase activity even if the active site is conserved. This is Germin-like protein 5-1 from Oryza sativa subsp. japonica (Rice).